The chain runs to 2515 residues: MEKPVVNVDVDPQSPFVVQLQKSFPQFEVVAQQATPNDHANARAFSHLASKLIELEVPTTATILDIGSAPARRMFSEHQYHCVCPMRSPEDPDRMMKYASKLAEKACKITNKNLHEKIKDLRTVLDTPDAETPSLCFHNDVTCNTRAEYSVMQDVYINAPGTIYHQAMKGVRTLYWIGFDTTQFMFSAMAGSYPAYNTNWADEKVLEARNIGLCSTKLSEGRTGKLSIMRKKELKPGSRVYFSVGSTLYPEHRASLQSWHLPSVFHLKGKQSYTCRCDTVVSCEGYVVKKITISPGITGETVGYAVTNNSEGFLLCKVTDTVKGERVSFPVCTYIPATICDQMTGIMATDISPDDAQKLLVGLNQRIVINGKTNRNTNTMQNYLLPTIAQGFSKWAKERKEDLDNEKMLGTRERKLTYGCLWAFRTKKVHSFYRPPGTQTSVKVPASFSAFPMSSVWTTSLPMSLRQKMKLALQPKKEEKLLQVPEELVMEAKAAFEDAQEEARAEKLREALPPLVADKDIEAAAEVVCEVEGLQADIGAALVETPRGHVRIIPQANDRMIGQYIVVSPTSVLKNAKLAPAHPLADQVKIITHSGRAGRYAVEPYDAKVLMPAGSAVPWPEFLALSESATLVYNEREFVNRKLYHIAMHGPAKNTEEEQYKVTKAELAETEYVFDVDKKRCVKKEEASGLVLSGELTNPPYHELALEGLKTRPAVPYKVETIGVIGTPGSGKSAIIKSTVTARDLVTSGKKENCREIEADVLRLRGMQITSKTVDSVMLNGCHKAVEVLYVDEAFACHAGALLALIAIVRPRKKVVLCGDPKQCGFFNMMQLKVHFNHPERDICTKTFYKFISRRCTQPVTAIVSTLHYDGKMKTTNPCKKNIEIDITGATKPKPGDIILTCFRGWVKQLQIDYPGHEVMTAAASQGLTRKGVYAVRQKVNENALYAITSEHVNVLLTRTEDRLVWKTLQGDPWIKQLTNVPKGNFQATIEDWEAEHKGIIAAINSPAPRTNPFSCKTNVCWAKALEPILATAGIVLTGCQWSELFPQFADDKPHSAIYALDVICIKFFGMDLTSGLFSKQSIPLTYHPADSARPVAHWDNSPGTRKYGYDHAVAAELSRRFPVFQLAGKGTQLDLQTGRTRVISAQHNLVPVNRNLPHALVPEHKEKQPGPVEKFLNQFKHHSVLVVSEEKIEAPHKRIEWIAPIGIAGADKNYNLAFGFPPQARYDLVFINIGTKYRNHHFQQCEDHAATLKTLSRSALNCLNPGGTLVVKSYGYADRNSEDVVTALARKFVRVSAARPECVSSNTEMYLIFRQLDNSRTRQFTPHHLNCVISSVYEGTRDGVGAAPSYRTKRENIADCQEEAVVNAANPLGRPGEGVCRAIYKRWPNSFTDSATETGTAKLTVCHGKKVIHAVGPDFRKHPEAEALKLLQNAYHAVADLVNEHNIKSVAIPLLSTGIYAAGKDRLEVSLNCLTTALDRTDADVTIYCLDKKWKERIDAVLQLKESVTELKDEDMEIDDELVWIHPDSCLKGRKGFSTTKGKLYSYFEGTKFHQAAKDMAEIKVLFPNDQESNEQLCAYILGETMEAIREKCPVDHNPSSSPPKTLPCLCMYAMTPERVHRLRSNNVKEVTVCSSTPLPKYKIKNVQKVQCTKVVLFNPHTPAFVPARKYIEVPEQPAAPPAQDEEAPEAVATPAPPAADNTSLDVTDISLDMDDSSEGSLFSSFSGSDNSITCMDRWSSGPSSLDRRQVVVADVHAVQEPAPIPPPRLKKMARLAAASKTQEEPIPPASTSSADESLHLSFGGVSMSFGSLLDGEMARLAAAQPPATGPTDVPMSFGSFSDGEIEELSRRVTESEPVLFGSFEPGEVNSIISSRSAVSFPLRKQRRRRRSRRTEYXLTGVGGYIFSTDTGPGHLQMKSVLQNQLTEPTLERNVLERIYAPVLDTSKEEQLKLRYQMMPTEANKSRYQSRKVENQKAITTERLLSGLRLYNSATDQPECYKITYPKPSYSSSVAANYSDPKFAVAVCNNYLHENYPTVASYQITDEYDAYLDMVDGTVACLDTATFCPAKLRSYPKRHEYRAPNIRSAVPSAMQNTLQNVLIAATKRNCNVTQMRELPTLDSATFNVECFRKYACNDEYWEEFARKPIRITTEFVTAYVARLKGPKAAALFAKTHNLVPLQEVPMDRFVMDMKRDVKVTPGTKHTEERPKVQVIQAAEPLATAYLCGIHRELVRRLTAVLLPNIHTLFDMSAEDFDAIIAEHFKQGDPVLETDIASFDKSQDDAMALTGLMILEDLGVDQPLLDLIECAFGEISSTHLPTGTRFKFGAMMKSGMFLTLFVNTVLNVVIASRVLEERLKTSKCAAFIGDDNIIHGVVSDKEMAERCATWLNMEVKIIDAVIGERPPYFCGGFILQDSVTSTACRVADPLKRLFKLGKPLPADDEQDEDRRRALLDETKAWFRVGITDTLAVAVATRYEVDNITPVLLALRTFAQSKRAFQAIRGEIKHLYGGPK.

In terms of domain architecture, Alphavirus-like MT spans 30 to 260 (VAQQATPNDH…EHRASLQSWH (231 aa)). The segment at 245-264 (GSTLYPEHRASLQSWHLPSV) is nsP1 membrane-binding. A lipid anchor (S-palmitoyl cysteine; by host) is attached at Cys420. The region spanning 695-850 (ELTNPPYHEL…RDICTKTFYK (156 aa)) is the (+)RNA virus helicase ATP-binding domain. An a ribonucleoside 5'-triphosphate-binding site is contributed by 726-733 (GTPGSGKS). Positions 851-999 (FISRRCTQPV…IEDWEAEHKG (149 aa)) constitute a (+)RNA virus helicase C-terminal domain. A Peptidase C9 domain is found at 1012-1341 (NPFSCKTNVC…CVISSVYEGT (330 aa)). Residues 1013–1032 (PFSCKTNVCWAKALEPILAT) are nucleolus localization signal. Residue Cys1021 is the For cysteine protease nsP2 activity of the active site. A Nuclear export signal motif is present at residues 1066–1075 (IKFFGMDLTS). His1098 serves as the catalytic For cysteine protease nsP2 activity. A Nuclear localization signal motif is present at residues 1196-1200 (PHKRI). Residues 1348–1507 (APSYRTKREN…RIDAVLQLKE (160 aa)) form the Macro domain. 5 residues coordinate ADP-D-ribose: Asn1371, Gly1379, Gly1459, Ile1460, and Tyr1461. Residues Cys1610, Cys1612, Cys1635, and Cys1653 each contribute to the Zn(2+) site. 2 disordered regions span residues 1678-1705 (QPAAPPAQDEEAPEAVATPAPPAADNTS) and 1777-1797 (LAAASKTQEEPIPPASTSSAD). 2 consecutive short sequence motifs (FGDF; binding to host G3BP1) follow at residues 1839–1842 (FGSF) and 1862–1865 (FGSF). Positions 2269 to 2384 (DPVLETDIAS…HGVVSDKEMA (116 aa)) constitute a RdRp catalytic domain.

In terms of assembly, interacts with non-structural protein 3. Interacts with RNA-directed RNA polymerase nsP4. Interacts with protease nsP2. interacts with itself. Interacts with mRNA-capping enzyme nsP1. Interacts with host DDX1. Interacts with host DDX3. Interacts (via C-terminus) with host G3BP1; this interaction inhibits the formation of host stress granules on viral mRNAs and the nsp3-G3BP1 complexes bind viral RNAs and probably orchestrate the assembly of viral replication complexes. Interacts (via C-terminus) with host G3BP2; this interaction inhibits the formation of host stress granules on viral mRNAs and the nsp3-G3BP2 complexes bind viral RNAs and probably orchestrate the assembly of viral replication complexes. As to quaternary structure, interacts with mRNA-capping enzyme nsP1. Interacts with protease nsP2. interacts with itself. In terms of assembly, interacts with RNA-directed RNA polymerase nsP4. Interacts with mRNA-capping enzyme nsP1. Interacts with KPNA1/karyopherin-alpha1; this interaction probably allows the active transport of protease nsP2 into the host nucleus. Mg(2+) serves as cofactor. It depends on Mn(2+) as a cofactor. Post-translationally, specific enzymatic cleavages in vivo yield mature proteins. The processing of the polyprotein is temporally regulated. In early stages (1.7 hpi), P1234 is first cleaved in trans through its nsP2 protease activity, releasing P123' and nsP4, which associate to form the early replication complex. At the same time, P1234 is also cut at the nsP1/nsP2 site early in infection but with lower efficiency. After replication of the viral minus-strand RNAs (4 hpi), the polyproteins are cut at the nsP1/nsP2 and nsP2/nsP3 sites very efficiently, preventing accumulation of P123' and P1234 and allowing the formation of the late replication complex. NsP3'/nsP4 site is not cleaved anymore and P34 is produced rather than nsP4. In terms of processing, specific enzymatic cleavages in vivo yield mature proteins. The processing of the polyprotein is temporally regulated. In early stages (1.7 hpi), P123 is cleaved at the nsP1/nsP2 site with low efficiency. After replication of the viral minus-strand RNAs (4 hpi), the polyproteins are cut at the nsP1/nsP2 and nsP2/nsP3 sites very efficiently, preventing accumulation of P123 and allowing the formation of the late replication complex. Specific enzymatic cleavages in vivo yield mature proteins. The processing of the polyprotein is temporally regulated. In early stages (1.7 hpi), P123' is cleaved at the nsP1/nsP2 site with low efficiency. After replication of the viral minus-strand RNAs (4 hpi), the polyproteins are cut at the nsP1/nsP2 and nsP2/nsP3 sites very efficiently, preventing accumulation of P123' and allowing the formation of the late replication complex. Post-translationally, palmitoylated by host palmitoyltransferases ZDHHC2 and ZDHHC19. In terms of processing, phosphorylated by host on serines and threonines. Ubiquitinated; targets the protein for rapid degradation via the ubiquitin system. Nsp4 is present in extremely low quantities due to low frequency of translation through the amber stop-codon and the degradation by the ubiquitin pathway.

It is found in the host cytoplasmic vesicle membrane. The protein resides in the host cell membrane. It localises to the host cell projection. The protein localises to the host filopodium. Its subcellular location is the host nucleus. It is found in the host cytoplasm. It catalyses the reaction GTP + S-adenosyl-L-methionine = N(7)-methyl-GTP + S-adenosyl-L-homocysteine. The catalysed reaction is N(7)-methyl-GTP + L-histidyl-[protein] = N(tele)-(N(7)-methylguanosine 5'-phospho)-L-histidyl-[protein] + diphosphate. The enzyme catalyses N(tele)-(N(7)-methylguanosine 5'-phospho)-L-histidyl-[protein] + a 5'-end diphospho-(purine-ribonucleoside) in mRNA + H(+) = a 5'-end (N(7)-methyl 5'-triphosphoguanosine)-(purine-ribonucleoside) in mRNA + L-histidyl-[protein]. It carries out the reaction a 5'-end triphospho-ribonucleoside in mRNA + H2O = a 5'-end diphospho-ribonucleoside in mRNA + phosphate + H(+). It catalyses the reaction a ribonucleoside 5'-triphosphate + H2O = a ribonucleoside 5'-diphosphate + phosphate + H(+). The catalysed reaction is ATP + H2O = ADP + phosphate + H(+). The enzyme catalyses RNA(n) + a ribonucleoside 5'-triphosphate = RNA(n+1) + diphosphate. It carries out the reaction RNA(n) + ATP = RNA(n)-3'-adenine ribonucleotide + diphosphate. It catalyses the reaction 4-O-(ADP-D-ribosyl)-L-aspartyl-[protein] + H2O = L-aspartyl-[protein] + ADP-D-ribose + H(+). The catalysed reaction is 5-O-(ADP-D-ribosyl)-L-glutamyl-[protein] + H2O = L-glutamyl-[protein] + ADP-D-ribose + H(+). The enzyme catalyses ADP-alpha-D-ribose 1''-phosphate + H2O = ADP-D-ribose + phosphate. In terms of biological role, inactive precursor of the viral replicase, which is activated by cleavages carried out by the viral protease nsP2. The early replication complex formed by the polyprotein P123 and nsP4 synthesizes minus-strand RNAs. As soon P123 is cleaved into mature proteins, the plus-strand RNAs synthesis begins. Functionally, the early replication complex formed by the polyprotein P123' and nsP4 synthesizes minus-strand RNAs. Polyprotein P123' is a short-lived polyprotein that accumulates during early stage of infection. As soon P123' is cleaved into mature proteins, the plus-strand RNAs synthesis begins. Its function is as follows. Cytoplasmic capping enzyme that catalyzes two virus-specific reactions: methyltransferase and nsP1 guanylyltransferase. mRNA-capping is necessary since all viral RNAs are synthesized in the cytoplasm, and host capping enzymes are restricted to the nucleus. The enzymatic reaction involves a covalent link between 7-methyl-GMP and nsP1, whereas eukaryotic capping enzymes form a covalent complex only with GMP. nsP1 capping consists in the following reactions: GTP is first methylated into 7-methyl-GMP and then is covalently linked to nsP1 to form the m7GMp-nsP1 complex from which 7-methyl-GMP complex is transferred to the mRNA to create the cap structure. NsP1 is needed for the initiation of the minus-strand RNAs synthesis. Probably serves as a membrane anchor for the replication complex composed of nsP1-nsP4. Palmitoylated nsP1 is remodeling host cell cytoskeleton, and induces filopodium-like structure formation at the surface of the host cell. Interacts with host TMEM45B; this interaction leads to viral replication inhibition. In terms of biological role, multifunctional protein whose N-terminus is part of the RNA polymerase complex and displays NTPase, RNA triphosphatase and helicase activities. NTPase and RNA triphosphatase are involved in viral RNA capping and helicase keeps a check on the dsRNA replication intermediates. The C-terminus harbors a protease that specifically cleaves the polyproteins and releases the mature proteins. Required for the shutoff of minus-strand RNAs synthesis. Specifically inhibits the host IFN response by promoting the nuclear export of host STAT1. Also inhibits host transcription by inducing rapid proteasome-dependent degradation of POLR2A, a catalytic subunit of the RNAPII complex. The resulting inhibition of cellular protein synthesis serves to ensure maximal viral gene expression and to evade host immune response. Seems to be essential for minus-strand RNAs and subgenomic 26S mRNAs synthesis. Displays mono-ADP-ribosylhydrolase activity. ADP-ribosylation is a post-translational modification that controls various processes of the host cell and the virus probably needs to revert it for optimal viral replication. Binds proteins of FXR family and sequesters them into the viral RNA replication complexes thereby inhibiting the formation of host stress granules on viral mRNAs. The nsp3'-FXR complexes bind viral RNAs and probably orchestrate the assembly of viral replication complexes, thanks to the ability of FXR family members to self-assemble and bind DNA. Functionally, seems to be essential for minus-strand RNAs and subgenomic 26S mRNAs synthesis. Displays mono-ADP-ribosylhydrolase activity. ADP-ribosylation is a post-translantional modification that controls various processes of the host cell and the virus probably needs to revert it for optimal viral replication. Binds proteins of G3BP family and sequesters them into the viral RNA replication complexes thereby inhibiting the formation of host stress granules on viral mRNAs. The nsp3-G3BP complexes bind viral RNAs and probably orchestrate the assembly of viral replication complexes, thanks to the ability of G3BP family members to self-assemble and bind DNA. Its function is as follows. RNA dependent RNA polymerase. Replicates genomic and antigenomic RNA by recognizing replications specific signals. The early replication complex formed by the polyprotein P123 and nsP4 synthesizes minus-strand RNAs. The late replication complex composed of fully processed nsP1-nsP4 is responsible for the production of genomic and subgenomic plus-strand RNAs. The core catalytic domain of nsP4 also possesses terminal adenylyltransferase (TATase) activity that is probably involved in maintenance and repair of the poly(A) tail, an element required for replication of the viral genome. Interacts with host TMEM45B; this interaction leads to viral replication inhibition. This chain is Polyprotein P1234, found in Acrocephalus scirpaceus (Eurasian reed-warbler).